The primary structure comprises 304 residues: Acetyl-coenzyme A carboxylase carboxyl transferase subunit beta (304 aa).

One can recognise a CoA carboxyltransferase N-terminal domain in the interval 25–294 (LWIKCPETGE…EAARRESGSQ (270 aa)).

The protein belongs to the AccD/PCCB family. In terms of assembly, acetyl-CoA carboxylase is a heterohexamer composed of biotin carboxyl carrier protein (AccB), biotin carboxylase (AccC) and two subunits each of ACCase subunit alpha (AccA) and ACCase subunit beta (AccD).

The protein resides in the cytoplasm. It carries out the reaction N(6)-carboxybiotinyl-L-lysyl-[protein] + acetyl-CoA = N(6)-biotinyl-L-lysyl-[protein] + malonyl-CoA. It participates in lipid metabolism; malonyl-CoA biosynthesis; malonyl-CoA from acetyl-CoA: step 1/1. In terms of biological role, component of the acetyl coenzyme A carboxylase (ACC) complex. Biotin carboxylase (BC) catalyzes the carboxylation of biotin on its carrier protein (BCCP) and then the CO(2) group is transferred by the transcarboxylase to acetyl-CoA to form malonyl-CoA. This Sinorhizobium fredii (strain NBRC 101917 / NGR234) protein is Acetyl-coenzyme A carboxylase carboxyl transferase subunit beta.